The following is a 499-amino-acid chain: Glycerol kinase (499 aa).

T12 lines the ADP pocket. Residues T12, T13, and S14 each coordinate ATP. Sn-glycerol 3-phosphate is bound at residue T12. An ADP-binding site is contributed by R16. Positions 82, 83, 134, and 243 each coordinate sn-glycerol 3-phosphate. 5 residues coordinate glycerol: R82, E83, Y134, D243, and Q244. The ADP site is built by T265 and G308. T265, G308, Q312, and G409 together coordinate ATP. ADP contacts are provided by G409 and N413.

The protein belongs to the FGGY kinase family. Homotetramer and homodimer (in equilibrium).

The enzyme catalyses glycerol + ATP = sn-glycerol 3-phosphate + ADP + H(+). It functions in the pathway polyol metabolism; glycerol degradation via glycerol kinase pathway; sn-glycerol 3-phosphate from glycerol: step 1/1. Its activity is regulated as follows. Activated by phosphorylation and inhibited by fructose 1,6-bisphosphate (FBP). Its function is as follows. Key enzyme in the regulation of glycerol uptake and metabolism. Catalyzes the phosphorylation of glycerol to yield sn-glycerol 3-phosphate. This is Glycerol kinase from Lachnoclostridium phytofermentans (strain ATCC 700394 / DSM 18823 / ISDg) (Clostridium phytofermentans).